The sequence spans 126 residues: Copper resistance protein C (126 aa).

Residues 1–23 (MSILNKAILTGGLVMGVAFSAMA) form the signal peptide. A Cu(2+)-binding site is contributed by histidine 24. Residues methionine 63, methionine 66, methionine 69, histidine 72, and methionine 75 each coordinate Cu(+). Histidine 115 serves as a coordination point for Cu(2+).

The protein belongs to the CopC family. As to quaternary structure, monomer-dimer equilibrium in solution for the apo protein. Dimerization is significantly enhanced upon binding of copper(I).

The protein localises to the periplasm. Functionally, copper-binding protein involved in copper resistance. This is Copper resistance protein C from Escherichia coli.